We begin with the raw amino-acid sequence, 372 residues long: MTSIEPTHTGKKVIVGMSGGVDSSVSAYLLMQQGYQVEGLFMKNWEEDDNNEYCAAAEDLKDAQAVCDKLGIKLHTVNFAAEYWDNVFEYFLAEYKAGRTPNPDIMCNKEIKFKAFLEFADEILDADYIAMGHYVRRRDNSDGSTQMLRGVDGNKDQSYFLYTLSHEQVARSLFPVGELEKHEVREIAKEMGLITHDKKDSTGICFIGERKFTEFLGTYLPAQPGNIETPEGEVIGTHQGLMYHTLGQRKGLGIGGMKNSNDDPWYVVDKDLERNVLIVGQGGHHPRLMSTGMTVNQLHWVDRTGPVDGCHIAVKTRYRQQDVPCTLTYTDEHTLGVVFDEPVAAVTPGQSAVFYDGEVCLGGGIIDQLIRG.

Residues glycine 16–serine 23 and methionine 42 each bind ATP. The segment at asparagine 102–aspartate 104 is interaction with target base in tRNA. Cysteine 107 acts as the Nucleophile in catalysis. Cysteines 107 and 205 form a disulfide. Position 132 (glycine 132) interacts with ATP. The interval lysine 155–glutamine 157 is interaction with tRNA. Cysteine 205 functions as the Cysteine persulfide intermediate in the catalytic mechanism. The interaction with tRNA stretch occupies residues arginine 317–tyrosine 318.

The protein belongs to the MnmA/TRMU family.

It localises to the cytoplasm. It carries out the reaction S-sulfanyl-L-cysteinyl-[protein] + uridine(34) in tRNA + AH2 + ATP = 2-thiouridine(34) in tRNA + L-cysteinyl-[protein] + A + AMP + diphosphate + H(+). Its function is as follows. Catalyzes the 2-thiolation of uridine at the wobble position (U34) of tRNA, leading to the formation of s(2)U34. This chain is tRNA-specific 2-thiouridylase MnmA, found in Shewanella baltica (strain OS223).